The chain runs to 447 residues: Probable glycine dehydrogenase (decarboxylating) subunit 1 (447 aa).

This sequence belongs to the GcvP family. N-terminal subunit subfamily. In terms of assembly, the glycine cleavage system is composed of four proteins: P, T, L and H. In this organism, the P 'protein' is a heterodimer of two subunits.

It catalyses the reaction N(6)-[(R)-lipoyl]-L-lysyl-[glycine-cleavage complex H protein] + glycine + H(+) = N(6)-[(R)-S(8)-aminomethyldihydrolipoyl]-L-lysyl-[glycine-cleavage complex H protein] + CO2. Its function is as follows. The glycine cleavage system catalyzes the degradation of glycine. The P protein binds the alpha-amino group of glycine through its pyridoxal phosphate cofactor; CO(2) is released and the remaining methylamine moiety is then transferred to the lipoamide cofactor of the H protein. The polypeptide is Probable glycine dehydrogenase (decarboxylating) subunit 1 (Bacillus mycoides (strain KBAB4) (Bacillus weihenstephanensis)).